Reading from the N-terminus, the 1016-residue chain is Kinesin-like protein KIN-14K (1016 aa).

Residues 14–121 enclose the Calponin-homology (CH) domain; it reads ADRRAEVIEW…CLLVLRESVS (108 aa). Residues 123 to 176 are disordered; that stretch reads GLRDGTSKAPLRKKWRVPETGEPLVPGVAQGKTSPGEDKRNGLPDPKSQQKTPI. A coiled-coil region spans residues 288–354; that stretch reads VNGTNEENQM…EVMTSMHEQQ (67 aa). The region spanning 481 to 808 is the Kinesin motor domain; that stretch reads NIRVYCRVRP…LKFAERVSGV (328 aa). Position 565–572 (565–572) interacts with ATP; that stretch reads GQTGSGKT. Residues 820–852 are a coiled coil; it reads KDIKELLEQVASLKDTIVRKDTEIEQLQLMKDK. Polar residues-rich tracts occupy residues 884-893 and 990-1004; these read NQQSQLSDPQ and KTPN…QLIG. 2 disordered regions span residues 884-912 and 971-1016; these read NQQS…DITP and LTKN…RWQK.

Belongs to the TRAFAC class myosin-kinesin ATPase superfamily. Kinesin family. KIN-14 subfamily.

In Oryza sativa subsp. japonica (Rice), this protein is Kinesin-like protein KIN-14K.